Reading from the N-terminus, the 297-residue chain is Bifunctional protein FolD (297 aa).

Residues 168 to 170, threonine 197, and valine 238 each bind NADP(+); that span reads GRS.

This sequence belongs to the tetrahydrofolate dehydrogenase/cyclohydrolase family. Homodimer.

The catalysed reaction is (6R)-5,10-methylene-5,6,7,8-tetrahydrofolate + NADP(+) = (6R)-5,10-methenyltetrahydrofolate + NADPH. It carries out the reaction (6R)-5,10-methenyltetrahydrofolate + H2O = (6R)-10-formyltetrahydrofolate + H(+). Its pathway is one-carbon metabolism; tetrahydrofolate interconversion. Functionally, catalyzes the oxidation of 5,10-methylenetetrahydrofolate to 5,10-methenyltetrahydrofolate and then the hydrolysis of 5,10-methenyltetrahydrofolate to 10-formyltetrahydrofolate. In Lawsonia intracellularis (strain PHE/MN1-00), this protein is Bifunctional protein FolD.